Reading from the N-terminus, the 849-residue chain is Mechanosensitive ion channel protein 7 (849 aa).

Positions 1-49 (MEFRKPFKSHSSYKQIISTGDQNEKTKKKKKLANLDDGDIAKTQSSGSS) are disordered. Over residues 9-21 (SHSSYKQIISTGD) the composition is skewed to polar residues. Transmembrane regions (helical) follow at residues 231–251 (AITL…VLSL), 274–294 (LVLI…VFFI), 313–333 (TAVQ…FLFD), 344–364 (VLLL…LWLI), 606–626 (MISF…LEIA), and 642–662 (AFMF…LFII).

It belongs to the MscS (TC 1.A.23) family.

It is found in the membrane. In terms of biological role, mechanosensitive channel that opens in response to stretch forces in the membrane lipid bilayer. The protein is Mechanosensitive ion channel protein 7 (MSL7) of Arabidopsis thaliana (Mouse-ear cress).